A 229-amino-acid polypeptide reads, in one-letter code: Deleted in azoospermia-like (229 aa).

The 82-residue stretch at 47–128 (NTLFVGGIDM…PAIMKERSSR (82 aa)) folds into the RRM domain. The DAZ domain maps to 172-198 (PYSYSSPPGIMVPQVPMNYAQTTYAYQ).

The protein belongs to the RRM DAZ family. As to expression, testis and ovary specific. In ovary, it is localized in the cortex of oocytes. At the onset of embryogenesis, maternal product is located at the vegetal pole, before migrating toward blastomeres through cytoplasmic streams as early embryogenesis proceededs.

The protein resides in the cytoplasm. Functionally, RNA-binding protein involved in gametogenesis in both males and females. Acts by binding to the 3'-UTR of mRNA, specifically recognizing GUU triplets, and promoting the translation of key transcripts. Establishes oocyte polarity through interaction with Bucky ball (BUC). Interacts with Bucky ball (BUC) mRNA to mediate Balbiani body formation and oocyte polarity during early oogenesis. This chain is Deleted in azoospermia-like (dazl), found in Danio rerio (Zebrafish).